Consider the following 85-residue polypeptide: Sec-independent protein translocase protein TatA (85 aa).

Residues 1–21 form a helical membrane-spanning segment; the sequence is MGGISIWQLLIIALIVVLLFG. The segment at 43–85 is disordered; the sequence is MSSEEDKKALEDAEAAKPVQTAQTAQPTQQATEKKPESNKEQA. Positions 46–57 are enriched in basic and acidic residues; sequence EEDKKALEDAEA. Residues 58-73 show a composition bias toward low complexity; the sequence is AKPVQTAQTAQPTQQA. Residues 74–85 are compositionally biased toward basic and acidic residues; that stretch reads TEKKPESNKEQA.

This sequence belongs to the TatA/E family. The Tat system comprises two distinct complexes: a TatABC complex, containing multiple copies of TatA, TatB and TatC subunits, and a separate TatA complex, containing only TatA subunits. Substrates initially bind to the TatABC complex, which probably triggers association of the separate TatA complex to form the active translocon.

The protein localises to the cell inner membrane. In terms of biological role, part of the twin-arginine translocation (Tat) system that transports large folded proteins containing a characteristic twin-arginine motif in their signal peptide across membranes. TatA could form the protein-conducting channel of the Tat system. In Shewanella sp. (strain MR-4), this protein is Sec-independent protein translocase protein TatA.